We begin with the raw amino-acid sequence, 268 residues long: Small ribosomal subunit protein uS2 (268 aa).

A laminin-binding region spans residues 161 to 179; the sequence is IPCNNDKYSIALMLWMLAR.

This sequence belongs to the universal ribosomal protein uS2 family. Component of the small ribosomal subunit. Mature ribosomes consist of a small (40S) and a large (60S) subunit. The 40S subunit contains about 33 different proteins and 1 molecule of RNA (18S). The 60S subunit contains about 49 different proteins and 3 molecules of RNA (28S, 5.8S and 5S). Interacts with ribosomal protein S21.

It is found in the cytoplasm. Its function is as follows. Required for the assembly and/or stability of the 40S ribosomal subunit. Required for the processing of the 20S rRNA-precursor to mature 18S rRNA in a late step of the maturation of 40S ribosomal subunits. Binds laminin. This chain is Small ribosomal subunit protein uS2 (egmo3), found in Echinococcus granulosus (Hydatid tapeworm).